A 573-amino-acid chain; its full sequence is Sulfate adenylyltransferase (573 aa).

The tract at residues 1-169 is N-terminal; the sequence is MSNPPHGGVL…LEAVNKLQHY (169 aa). The interval 170–394 is catalytic; it reads DFVDLRYSPA…LRESHPPRSQ (225 aa). Residue Gln197 participates in sulfate binding. Residues 197 to 200 and 291 to 294 contribute to the ATP site; these read QTRN and GRDH. Catalysis depends on residues Thr198, Arg199, and Asn200. Arg199 is a sulfate binding site. Ala295 provides a ligand contact to sulfate. Met333 contacts ATP. The interval 395-573 is allosteric regulation domain; adenylyl-sulfate kinase-like; sequence QGFTVLFTGY…LESQGLLDRF (179 aa). 3'-phosphoadenylyl sulfate is bound by residues 434-437, Arg451, 477-478, and Arg515; these read ENIR and IA.

It in the N-terminal section; belongs to the sulfate adenylyltransferase family. The protein in the C-terminal section; belongs to the APS kinase family. In terms of assembly, homohexamer. Dimer of trimers.

Its subcellular location is the cytoplasm. It catalyses the reaction sulfate + ATP + H(+) = adenosine 5'-phosphosulfate + diphosphate. The protein operates within sulfur metabolism; hydrogen sulfide biosynthesis; sulfite from sulfate: step 1/3. With respect to regulation, allosterically inhibited by 3'-phosphoadenosine 5'-phosphosulfate (PAPS). Functionally, catalyzes the first intracellular reaction of sulfate assimilation, forming adenosine-5'-phosphosulfate (APS) from inorganic sulfate and ATP. Plays an important role in sulfate activation as a component of the biosynthesis pathway of sulfur-containing amino acids. This is Sulfate adenylyltransferase (cys-11) from Neurospora crassa (strain ATCC 24698 / 74-OR23-1A / CBS 708.71 / DSM 1257 / FGSC 987).